The following is a 738-amino-acid chain: Probable trehalase (738 aa).

The tract at residues 1 to 44 (MLQGMPKRSGSISELHDPFSSPDVYYGPATDPRRQKQPNKYSRT) is disordered. Substrate contacts are provided by residues Arg289, 296 to 297 (WD), Asn333, Arg342, 342 to 344 (RSQ), and Gly463. Residues Asp465 and Glu660 each act as proton donor/acceptor in the active site.

The protein belongs to the glycosyl hydrolase 37 family.

The catalysed reaction is alpha,alpha-trehalose + H2O = alpha-D-glucose + beta-D-glucose. This Eremothecium gossypii (strain ATCC 10895 / CBS 109.51 / FGSC 9923 / NRRL Y-1056) (Yeast) protein is Probable trehalase (NTH2).